Here is a 1213-residue protein sequence, read N- to C-terminus: SWI/SNF complex subunit SMARCC2 (1213 aa).

A marR-like, BRCT and chromo domains module region spans residues 1–274; it reads MAVRKKDGGP…PVSRRKKISA (274 aa). Residues 10–136 enclose the MarR-like domain; it reads PNVKYYEAAD…IEKSLVQNNC (127 aa). The region spanning 140–183 is the BRCT; N-terminus domain; that stretch reads PNIFLCPEIEPKLLGKLKDIVKRHQGTISEDKSNASHVVYPVPG. The region spanning 189–217 is the Chromo domain; that stretch reads EWVRPVMKRDKQVLLHWGYYPDSYDTWIP. One can recognise a BRCT; C-terminus domain in the interval 233-257; it reads KPRKVHAKWILDTDTFNEWMNEEDY. The segment at 256–413 is disordered; it reads DYEVSDDKSP…GEQTKNPDLH (158 aa). Residues 275-284 are compositionally biased toward polar residues; it reads KTLTDEVNSP. Residues S283, S286, S302, S304, and S306 each carry the phosphoserine modification. K312 is subject to N6-(ADP-ribosyl)lysine. Residue K326 is modified to N6-acetyllysine. Positions 331-344 are enriched in basic and acidic residues; it reads HREEEQEDLTKDMD. A phosphoserine mark is found at S347 and S387. Positions 379–398 are enriched in acidic residues; the sequence is DLDEQDDESMETTGKDEDEN. The SWIRM domain occupies 424–521; the sequence is IIIPSYAAWF…YQVDAESRPT (98 aa). Residues K564, K566, K568, and K592 each participate in a glycyl lysine isopeptide (Lys-Gly) (interchain with G-Cter in SUMO2) cross-link. In terms of domain architecture, SANT spans 596–647; sequence SATREWTEQETLLLLEALEMYKDDWNKVSEHVGSRTQDECILHFLRLPIEDP. A Glycyl lysine isopeptide (Lys-Gly) (interchain with G-Cter in SUMO2) cross-link involves residue K704. Residues 724 to 848 are disordered; that stretch reads KVTGKADPAF…AEPEGERKTK (125 aa). Basic and acidic residues predominate over residues 747–777; sequence EPERIEESGTEEARPEGQAADEKKEPKEPRE. Residue K787 forms a Glycyl lysine isopeptide (Lys-Gly) (interchain with G-Cter in SUMO2) linkage. Residues 788-848 show a composition bias toward basic and acidic residues; that stretch reads EEISEVPKKD…AEPEGERKTK (61 aa). At S813 the chain carries Phosphoserine. K848 is covalently cross-linked (Glycyl lysine isopeptide (Lys-Gly) (interchain with G-Cter in SUMO2)). Residues 907 to 934 adopt a coiled-coil conformation; the sequence is EELETIMDREREALEYQRQQLLADRQAF. Disordered regions lie at residues 947–1073 and 1181–1213; these read RQQH…HPGV and LPSA…PPPQ. Low complexity predominate over residues 949–962; the sequence is QHFQQMHQQQQQQP. Over residues 963–974 the composition is skewed to pro residues; that stretch reads PTLPPGSQPIPP. Residues 975–1033 are compositionally biased toward low complexity; that stretch reads TGAAGPPTVHGLAVPPAAVASAPPGSGAPPGSLGPSEQIGQAGTTAGPQQPQQAGAPQP. Pro residues-rich tracts occupy residues 1034 to 1060 and 1185 to 1201; these read GAVP…PPSM and SPLP…PTAP.

This sequence belongs to the SMARCC family. In terms of assembly, component of the multiprotein chromatin-remodeling complexes SWI/SNF: SWI/SNF-A (BAF), SWI/SNF-B (PBAF) and related complexes. The canonical complex contains a catalytic subunit (either SMARCA4/BRG1/BAF190A or SMARCA2/BRM/BAF190B) and at least SMARCE1, ACTL6A/BAF53, SMARCC1/BAF155, SMARCC2/BAF170, and SMARCB1/SNF5/BAF47. Other subunits specific to each of the complexes may also be present permitting several possible combinations developmentally and tissue specific. Component of the BAF complex, which includes at least actin (ACTB), ARID1A/BAF250A, ARID1B/BAF250B, SMARCA2/BRM, SMARCA4/BRG1, ACTL6A/BAF53, ACTL6B/BAF53B, SMARCE1/BAF57, SMARCC1/BAF155, SMARCC2/BAF170, SMARCB1/SNF5/INI1, and one or more SMARCD1/BAF60A, SMARCD2/BAF60B, or SMARCD3/BAF60C. In muscle cells, the BAF complex also contains DPF3. Component of neural progenitors-specific chromatin remodeling complex (npBAF complex) composed of at least, ARID1A/BAF250A or ARID1B/BAF250B, SMARCD1/BAF60A, SMARCD3/BAF60C, SMARCA2/BRM/BAF190B, SMARCA4/BRG1/BAF190A, SMARCB1/BAF47, SMARCC1/BAF155, SMARCE1/BAF57, SMARCC2/BAF170, PHF10/BAF45A, ACTL6A/BAF53A and actin. Component of neuron-specific chromatin remodeling complex (nBAF complex) composed of at least, ARID1A/BAF250A or ARID1B/BAF250B, SMARCD1/BAF60A, SMARCD3/BAF60C, SMARCA2/BRM/BAF190B, SMARCA4/BRG1/BAF190A, SMARCB1/BAF47, SMARCC1/BAF155, SMARCE1/BAF57, SMARCC2/BAF170, DPF1/BAF45B, DPF3/BAF45C, ACTL6B/BAF53B and actin. Component of the SWI/SNF-B (PBAF) chromatin remodeling complex, at least composed of SMARCA4/BRG1, SMARCB1/BAF47/SNF5, ACTL6A/BAF53A or ACTL6B/BAF53B, SMARCE1/BAF57, SMARCD1/BAF60A, SMARCD2/BAF60B, perhaps SMARCD3/BAF60C, SMARCC1/BAF155, SMARCC2/BAF170, PBRM1/BAF180, ARID2/BAF200 and actin. May also interact with the SIN3A histone deacetylase transcription repressor complex in conjunction with SMARCA2 and SMARCA4. Interacts with SMARD1. Interacts with KDM6B. Interaction with RCOR1. Interacts with DPF2. Interacts with ERCC6. Interacts with FOS. In terms of processing, mono-ADP-ribosylation at Lys-312 by SIRT6 promotes recruitment to the enhancer region of the Heme oxygenase-1 (HO-1) locus, leading to transcription activation of the locus.

It localises to the nucleus. In terms of biological role, involved in transcriptional activation and repression of select genes by chromatin remodeling (alteration of DNA-nucleosome topology). Component of SWI/SNF chromatin remodeling complexes that carry out key enzymatic activities, changing chromatin structure by altering DNA-histone contacts within a nucleosome in an ATP-dependent manner. Can stimulate the ATPase activity of the catalytic subunit of these complexes. May be required for CoREST dependent repression of neuronal specific gene promoters in non-neuronal cells. Belongs to the neural progenitors-specific chromatin remodeling complex (npBAF complex) and the neuron-specific chromatin remodeling complex (nBAF complex). During neural development a switch from a stem/progenitor to a postmitotic chromatin remodeling mechanism occurs as neurons exit the cell cycle and become committed to their adult state. The transition from proliferating neural stem/progenitor cells to postmitotic neurons requires a switch in subunit composition of the npBAF and nBAF complexes. As neural progenitors exit mitosis and differentiate into neurons, npBAF complexes which contain ACTL6A/BAF53A and PHF10/BAF45A, are exchanged for homologous alternative ACTL6B/BAF53B and DPF1/BAF45B or DPF3/BAF45C subunits in neuron-specific complexes (nBAF). The npBAF complex is essential for the self-renewal/proliferative capacity of the multipotent neural stem cells. The nBAF complex along with CREST plays a role regulating the activity of genes essential for dendrite growth. Critical regulator of myeloid differentiation, controlling granulocytopoiesis and the expression of genes involved in neutrophil granule formation. The polypeptide is SWI/SNF complex subunit SMARCC2 (Smarcc2) (Mus musculus (Mouse)).